The sequence spans 514 residues: Peptide chain release factor 3 (514 aa).

In terms of domain architecture, tr-type G spans 8–268 (KKRRTFAIIS…TFLKFAPEPH (261 aa)). GTP contacts are provided by residues 17-24 (SHPDAGKT), 85-89 (DTPGH), and 139-142 (NKLD).

It belongs to the TRAFAC class translation factor GTPase superfamily. Classic translation factor GTPase family. PrfC subfamily.

The protein localises to the cytoplasm. Functionally, increases the formation of ribosomal termination complexes and stimulates activities of RF-1 and RF-2. It binds guanine nucleotides and has strong preference for UGA stop codons. It may interact directly with the ribosome. The stimulation of RF-1 and RF-2 is significantly reduced by GTP and GDP, but not by GMP. This chain is Peptide chain release factor 3, found in Streptococcus pneumoniae serotype 19F (strain G54).